A 213-amino-acid chain; its full sequence is LexA repressor (213 aa).

A DNA-binding region (H-T-H motif) is located at residues 27–47 (QTEIARAFGFKGVRAAQYHLE). Active-site for autocatalytic cleavage activity residues include S133 and K170.

Belongs to the peptidase S24 family. As to quaternary structure, homodimer.

The catalysed reaction is Hydrolysis of Ala-|-Gly bond in repressor LexA.. Its function is as follows. Represses a number of genes involved in the response to DNA damage (SOS response), including recA and lexA. In the presence of single-stranded DNA, RecA interacts with LexA causing an autocatalytic cleavage which disrupts the DNA-binding part of LexA, leading to derepression of the SOS regulon and eventually DNA repair. This chain is LexA repressor, found in Xanthomonas campestris.